Reading from the N-terminus, the 211-residue chain is Glycerol-3-phosphate acyltransferase (211 aa).

Helical transmembrane passes span 10 to 30 (FTTW…FGLL), 63 to 83 (ALTL…IKFL), 90 to 110 (NIFI…PVWL), 126 to 146 (LGLY…LFLI), and 152 to 172 (LSAL…YPYL).

The protein belongs to the PlsY family. In terms of assembly, probably interacts with PlsX.

It localises to the cell inner membrane. The enzyme catalyses an acyl phosphate + sn-glycerol 3-phosphate = a 1-acyl-sn-glycero-3-phosphate + phosphate. The protein operates within lipid metabolism; phospholipid metabolism. In terms of biological role, catalyzes the transfer of an acyl group from acyl-phosphate (acyl-PO(4)) to glycerol-3-phosphate (G3P) to form lysophosphatidic acid (LPA). This enzyme utilizes acyl-phosphate as fatty acyl donor, but not acyl-CoA or acyl-ACP. This Bartonella henselae (strain ATCC 49882 / DSM 28221 / CCUG 30454 / Houston 1) (Rochalimaea henselae) protein is Glycerol-3-phosphate acyltransferase.